Here is a 145-residue protein sequence, read N- to C-terminus: Small ribosomal subunit protein uS9 (145 aa).

Belongs to the universal ribosomal protein uS9 family.

The protein localises to the cytoplasm. This is Small ribosomal subunit protein uS9 (RPS16) from Gossypium hirsutum (Upland cotton).